The chain runs to 1262 residues: Ras-specific guanine nucleotide-releasing factor 1 (1262 aa).

The PH 1 domain maps to 22–130 (DGTRKGYLSK…WVAAIARASY (109 aa)). S71 is subject to Phosphoserine; by PLK2. The IQ domain maps to 208 to 233 (KKIKKVQSFLRGWLCRRKWKNIIQDY). The 187-residue stretch at 244–430 (KRNQVVFSML…EELSRIMHDE (187 aa)) folds into the DH domain. A PH 2 domain is found at 460-588 (TFVRQGSLMQ…WTSDIIQCVD (129 aa)). 2 positions are modified to phosphoserine; by PLK2: S581 and S617. The 115-residue stretch at 635–749 (KVLQIRYASV…RRRKLSLNIP (115 aa)) folds into the N-terminal Ras-GEF domain. Residues 714 to 738 (DAPKSPRASRKFSSPPPLAIGTSSP) form a disordered region. S745 is modified (phosphoserine). The residue at position 766 (S766) is a Phosphoserine; by PLK2. Positions 800–854 (EEIDVPATIPEKPGELSASRKHSSDVLKEESEDDQNHSDEDNTEVSPVKSPPTPK) are disordered. Basic and acidic residues predominate over residues 821-839 (HSSDVLKEESEDDQNHSDE). One can recognise a Ras-GEF domain in the interval 1027–1259 (PALEIAEQLT…YESSLLIEPK (233 aa)).

As to quaternary structure, homooligomer and heterooligomer with RASGRF2. Interacts with USP8, thereby regulating its stability. In terms of processing, phosphorylated by PLK2, leading to ubiquitination and degradation by the proteasome. Post-translationally, ubiquitinated and degraded following phosphorylation by PLK2. Phosphorylated by SRC and LCK. Phosphorylation by LCK increases its capacity to stimulate the GDP/GTP exchange on Ras, whereas its phosphorylation by SRC seems not to have an effect on stimulation activity. Brain.

Promotes the exchange of Ras-bound GDP by GTP. This is Ras-specific guanine nucleotide-releasing factor 1 (Rasgrf1) from Mus musculus (Mouse).